Consider the following 1196-residue polypeptide: Calcium-activated potassium channel subunit alpha-1 (1196 aa).

At 1-52 the chain is on the extracellular side; sequence MATWNASQIILNSMSNIIESPQSKPRPVMASNGASLFIPVTMEVPCDQGTRM. A helical transmembrane segment spans residues 53 to 73; it reads WWAFLASSMVTFFGGLFIILV. The Cytoplasmic segment spans residues 74–146; it reads WRTFKYLWTV…MISAQTLTGR (73 aa). Residues 147–167 traverse the membrane as a helical segment; that stretch reads VLVVTVFALSIGALMIYFIDS. The Extracellular segment spans residues 168 to 182; that stretch reads SNPIESCQNFYKDFT. The chain crosses the membrane as a helical span at residues 183 to 203; sequence LQIDMAFNIFFLLYFGLRFIA. The Cytoplasmic segment spans residues 204–207; that stretch reads ANDK. A helical transmembrane segment spans residues 208–228; sequence LWFWLEVNSVVDFFTVPPVFV. Topologically, residues 229-232 are extracellular; it reads SVYL. A helical; Voltage-sensor transmembrane segment spans residues 233–253; it reads NRSWLGLRFLRALRLIQFSEI. The Cytoplasmic segment spans residues 254 to 268; that stretch reads LQFLNILKTSNSIKL. A helical membrane pass occupies residues 269–289; that stretch reads VNLCSIFISTWLTAAGFIHLV. The Extracellular portion of the chain corresponds to 290–303; it reads ENSGDPWRNFENSQ. The pore-forming intramembrane region spans 304–326; that stretch reads DLSYWECMYLLMVTMSTVGYGDV. The Selectivity for potassium motif lies at 320–323; the sequence is TVGY. Residues 327–335 lie on the Extracellular side of the membrane; that stretch reads YAKTTLGRL. The helical transmembrane segment at 336-356 threads the bilayer; that stretch reads FMVFFILGGLAMFASYVPEII. Topologically, residues 357–1196 are cytoplasmic; it reads ELIGNRKKYG…PPIREVEDEC (840 aa). Positions 375 to 517 constitute an RCK N-terminal 1 domain; sequence RKHIVVCGHI…WNWKDGDDAI (143 aa). Residues glutamate 407, glutamine 430, and glutamate 432 each contribute to the Mg(2+) site. The segment S7 stretch occupies residues 524 to 544; the sequence is LGFIAQSCLAQGLSTMLANLF. Residues 581–601 are segment S8; the sequence is LSFPAVCELCFVKLKLLMIAI. The heme-binding motif stretch occupies residues 645 to 649; sequence CKACH. The disordered stretch occupies residues 672–697; sequence SALSPKKKQRNGGMRHSPNTSPNMMR. Residues 748–768 form a segment S9 region; that stretch reads VLSGHVVVCIFGDMTSALIGV. The region spanning 750-894 is the RCK N-terminal 2 domain; it reads SGHVVVCIFG…MERSSPDNSP (145 aa). The Calcium bowl motif lies at 914–936; sequence TELVNDSNVQFLDQDDDDDPDTE. Ca(2+) contacts are provided by glutamine 923, aspartate 926, aspartate 929, and aspartate 931. The tract at residues 943–963 is segment S10; that stretch reads FACGTAFAVSVLDSLMSATYF. The span at 1098 to 1119 shows a compositional bias: low complexity; the sequence is ASLSHSSHSSHSSSKKSSSVTS. The disordered stretch occupies residues 1098–1149; the sequence is ASLSHSSHSSHSSSKKSSSVTSILHTASANRQNRVKARDSRDKQKMGQAEKK. Polar residues predominate over residues 1120-1129; it reads ILHTASANRQ. Positions 1133-1149 are enriched in basic and acidic residues; that stretch reads KARDSRDKQKMGQAEKK.

Belongs to the potassium channel family. Calcium-activated (TC 1.A.1.3) subfamily. KCa1.1/KCNMA1 sub-subfamily. As to quaternary structure, homotetramer; which constitutes the calcium-activated potassium channel. Expressed in both the somites and neural tube of 1 day embryos. Within the nervous system, it is restricted to dorsal parts, and expressed centrally in regions dedicated to processing of sensory information. Six hours later, it is expressed segmentally within the somites. At this time, it is expressed in a primary sensory organ, the trigeminal ganglion. By 2 days, it is also expressed in other primary sensory organs, such as the otic vesicle, and the eye. Within the retina, it is expressed to an internal layer. In the developing otic vesicle, it is abundantly expressed near the apical surface. Isoform 3 is neural-specific, and is only expressed during late stages of neuronal differentiation.

Its subcellular location is the cell membrane. The catalysed reaction is K(+)(in) = K(+)(out). Ethanol and carbon monoxide-bound heme increase channel activation. Heme inhibits channel activation. Its function is as follows. Potassium channel activated by both membrane depolarization or increase in cytosolic Ca(2+) that mediates export of K(+). It is also activated by the concentration of cytosolic Mg(2+). Its activation dampens the excitatory events that elevate the cytosolic Ca(2+) concentration and/or depolarize the cell membrane. It therefore contributes to repolarization of the membrane potential. Plays a key role in controlling excitability in a number of systems, such as regulation of the contraction of smooth muscle, the tuning of hair cells in the cochlea, regulation of transmitter release, and innate immunity. In smooth muscles, its activation by high level of Ca(2+), caused by ryanodine receptors in the sarcoplasmic reticulum, regulates the membrane potential. In cochlea cells, its number and kinetic properties partly determine the characteristic frequency of each hair cell and thereby helps to establish a tonotopic map. Highly sensitive to both iberiotoxin (IbTx) and charybdotoxin (CTX). This is Calcium-activated potassium channel subunit alpha-1 (kcnma1) from Xenopus laevis (African clawed frog).